A 170-amino-acid polypeptide reads, in one-letter code: Peptide deformylase (170 aa).

Cysteine 88 and histidine 130 together coordinate Fe cation. Residue glutamate 131 is part of the active site. Fe cation is bound at residue histidine 134.

The protein belongs to the polypeptide deformylase family. Fe(2+) serves as cofactor.

The catalysed reaction is N-terminal N-formyl-L-methionyl-[peptide] + H2O = N-terminal L-methionyl-[peptide] + formate. In terms of biological role, removes the formyl group from the N-terminal Met of newly synthesized proteins. Requires at least a dipeptide for an efficient rate of reaction. N-terminal L-methionine is a prerequisite for activity but the enzyme has broad specificity at other positions. This is Peptide deformylase from Acetivibrio thermocellus (strain ATCC 27405 / DSM 1237 / JCM 9322 / NBRC 103400 / NCIMB 10682 / NRRL B-4536 / VPI 7372) (Clostridium thermocellum).